The primary structure comprises 298 residues: Zinc import ATP-binding protein ZnuC (298 aa).

The ABC transporter domain maps to 17-232 (IELRNAGVYR…PEYVRLFGSR (216 aa)). 49–56 (GPNGAGKS) provides a ligand contact to ATP. A disordered region spans residues 273–298 (RGHCHVEDGHHHDHEHHHHEGGQPRA). A compositionally biased stretch (basic and acidic residues) spans 276-298 (CHVEDGHHHDHEHHHHEGGQPRA).

The protein belongs to the ABC transporter superfamily. Zinc importer (TC 3.A.1.15.5) family. The complex is composed of two ATP-binding proteins (ZnuC), two transmembrane proteins (ZnuB) and a solute-binding protein (ZnuA).

It localises to the cell inner membrane. It catalyses the reaction Zn(2+)(out) + ATP(in) + H2O(in) = Zn(2+)(in) + ADP(in) + phosphate(in) + H(+)(in). Part of the ABC transporter complex ZnuABC involved in zinc import. Responsible for energy coupling to the transport system. The protein is Zinc import ATP-binding protein ZnuC of Brucella abortus (strain 2308).